The primary structure comprises 701 residues: Coiled-coil domain-containing protein 62 (701 aa).

Coiled-coil stretches lie at residues 61–197 and 241–342; these read ETST…LQAR and TCVV…QFLN. The tract at residues 624–652 is disordered; the sequence is KSAEREEESAALPDRRTSANEKDDFSPTS. Basic and acidic residues predominate over residues 636-648; that stretch reads PDRRTSANEKDDF. 2 consecutive short sequence motifs (LXXLL motif) follow at residues 654 to 658 and 670 to 674; these read LQRLL and LSTLL.

As to quaternary structure, interacts with ESR1 and ESR2 in the presence of estradiol/E2. The interaction with ESR2 recruits CCDC62 to ER target genes, including cyclin-D1/CCND1 AP-1 promoter. Interacts with GOPC. As to expression, highly expressed in testis, not detected in other tissues (at protein level). Expressed at low levels in the epididymis, lung, spleen, bladder, kidney, liver, muscle.

It localises to the cytoplasm. The protein resides in the nucleus. It is found in the cytoplasmic vesicle. Its subcellular location is the secretory vesicle. The protein localises to the acrosome. In terms of biological role, nuclear receptor coactivator that can enhance preferentially estrogen receptors ESR1 and ESR2 transactivation. Also modulates progesterone/PGR, glucocorticoid/NR3C1 and androgen/AR receptors transactivation, although at lower level; little effect on vitamin D receptor/VDR. Required for normal spermiogenesis. It probably plays a role in acrosome formation. The protein is Coiled-coil domain-containing protein 62 (Ccdc62) of Mus musculus (Mouse).